A 387-amino-acid polypeptide reads, in one-letter code: Protein SGT1 homolog (387 aa).

3 TPR repeats span residues 1–34 (MEQLKEGNSYFVDEQYDEALKCYDKACLELSNNA), 36–67 (AFFKRSQCHSKLSNLKEALSDINTSIKLDSNN), and 68–101 (SKYYLKKGQLCFELEEFDTALKTFEKGQSIDSEN). Disordered regions lie at residues 110-193 (KSKA…PSSG) and 299-323 (SPAVPSPYASKKDWDKLPNEPEEKL). Low complexity predominate over residues 118–127 (NPTTTTTTTP). Over residues 128–138 (TPTPTPTPAPQ) the composition is skewed to pro residues. The span at 139–185 (PVTTTTNPTPIPTTSNTTTTTNNNNNNNNNNNNNNNNNNTTTDSTTT) shows a compositional bias: low complexity. Residues 193 to 282 (GNKVRHEWYQ…SRAIKWDTLE (90 aa)) enclose the CS domain. The SGS domain maps to 301 to 387 (AVPSPYASKK…KGLEFKQYEK (87 aa)). Basic and acidic residues predominate over residues 308–323 (SKKDWDKLPNEPEEKL).

The protein belongs to the SGT1 family.

Functionally, may play a role in ubiquitination and subsequent proteasomal degradation of target proteins. In Dictyostelium discoideum (Social amoeba), this protein is Protein SGT1 homolog (sugt1).